The primary structure comprises 162 residues: ATP synthase subunit b 1 (162 aa).

The helical transmembrane segment at 1 to 21 (MLLTAEFWVAVAFVAFLVIVW) threads the bilayer.

It belongs to the ATPase B chain family. In terms of assembly, F-type ATPases have 2 components, F(1) - the catalytic core - and F(0) - the membrane proton channel. F(1) has five subunits: alpha(3), beta(3), gamma(1), delta(1), epsilon(1). F(0) has three main subunits: a(1), b(2) and c(10-14). The alpha and beta chains form an alternating ring which encloses part of the gamma chain. F(1) is attached to F(0) by a central stalk formed by the gamma and epsilon chains, while a peripheral stalk is formed by the delta and b chains.

The protein localises to the cell inner membrane. In terms of biological role, f(1)F(0) ATP synthase produces ATP from ADP in the presence of a proton or sodium gradient. F-type ATPases consist of two structural domains, F(1) containing the extramembraneous catalytic core and F(0) containing the membrane proton channel, linked together by a central stalk and a peripheral stalk. During catalysis, ATP synthesis in the catalytic domain of F(1) is coupled via a rotary mechanism of the central stalk subunits to proton translocation. Functionally, component of the F(0) channel, it forms part of the peripheral stalk, linking F(1) to F(0). This chain is ATP synthase subunit b 1, found in Methylorubrum extorquens (strain PA1) (Methylobacterium extorquens).